The sequence spans 125 residues: Large ribosomal subunit protein uL30 (125 aa).

Positions 1–61 (MSKLKVKLLR…HLVGVAYRID (61 aa)) are large ribosomal subunit protein uL30. The interval 62-125 (FSGDIPTVER…KNWKGEEVEL (64 aa)) is unknown.

Belongs to the universal ribosomal protein uL30 family. Part of the 50S ribosomal subunit.

The protein is Large ribosomal subunit protein uL30 of Aquifex aeolicus (strain VF5).